Consider the following 232-residue polypeptide: Uracil-DNA glycosylase (232 aa).

Residue aspartate 71 is the Proton acceptor of the active site.

This sequence belongs to the uracil-DNA glycosylase (UDG) superfamily. UNG family.

It localises to the cytoplasm. The enzyme catalyses Hydrolyzes single-stranded DNA or mismatched double-stranded DNA and polynucleotides, releasing free uracil.. Functionally, excises uracil residues from the DNA which can arise as a result of misincorporation of dUMP residues by DNA polymerase or due to deamination of cytosine. The chain is Uracil-DNA glycosylase from Azotobacter vinelandii (strain DJ / ATCC BAA-1303).